We begin with the raw amino-acid sequence, 109 residues long: uncharacterized protein (109 aa).

Residues 42–100 (LEEKLKQEKIDRKYLAEVTNIPYTTVSRIMRAEANREFNPEIDTILKIAKYFNCTMDEV) form the HTH cro/C1-type domain. A DNA-binding region (H-T-H motif) is located at residues 53 to 72 (RKYLAEVTNIPYTTVSRIMR).

This is an uncharacterized protein from Rickettsia conorii (strain ATCC VR-613 / Malish 7).